Reading from the N-terminus, the 346-residue chain is tRNA N6-adenosine threonylcarbamoyltransferase (346 aa).

Fe cation is bound by residues histidine 110 and histidine 114. Substrate-binding positions include 132–136 (LLSGG), aspartate 165, glycine 178, and asparagine 274. Position 298 (aspartate 298) interacts with Fe cation.

This sequence belongs to the KAE1 / TsaD family. It depends on Fe(2+) as a cofactor.

It localises to the cytoplasm. The enzyme catalyses L-threonylcarbamoyladenylate + adenosine(37) in tRNA = N(6)-L-threonylcarbamoyladenosine(37) in tRNA + AMP + H(+). Functionally, required for the formation of a threonylcarbamoyl group on adenosine at position 37 (t(6)A37) in tRNAs that read codons beginning with adenine. Is involved in the transfer of the threonylcarbamoyl moiety of threonylcarbamoyl-AMP (TC-AMP) to the N6 group of A37, together with TsaE and TsaB. TsaD likely plays a direct catalytic role in this reaction. The sequence is that of tRNA N6-adenosine threonylcarbamoyltransferase from Borreliella afzelii (strain PKo) (Borrelia afzelii).